The primary structure comprises 268 residues: Ribosomal RNA small subunit methyltransferase A (268 aa).

The S-adenosyl-L-methionine site is built by Asn17, Leu19, Gly44, Glu65, Asp89, and Asn110.

Belongs to the class I-like SAM-binding methyltransferase superfamily. rRNA adenine N(6)-methyltransferase family. RsmA subfamily.

It localises to the cytoplasm. It carries out the reaction adenosine(1518)/adenosine(1519) in 16S rRNA + 4 S-adenosyl-L-methionine = N(6)-dimethyladenosine(1518)/N(6)-dimethyladenosine(1519) in 16S rRNA + 4 S-adenosyl-L-homocysteine + 4 H(+). In terms of biological role, specifically dimethylates two adjacent adenosines (A1518 and A1519) in the loop of a conserved hairpin near the 3'-end of 16S rRNA in the 30S particle. May play a critical role in biogenesis of 30S subunits. In Acidithiobacillus ferrooxidans (strain ATCC 53993 / BNL-5-31) (Leptospirillum ferrooxidans (ATCC 53993)), this protein is Ribosomal RNA small subunit methyltransferase A.